The following is a 742-amino-acid chain: mRNA export factor ICP27 homolog (742 aa).

Positions 1–11 (MELHSRGRHDA) are enriched in basic and acidic residues. A disordered region spans residues 1 to 202 (MELHSRGRHD…NHHGSSAGPQ (202 aa)). A compositionally biased stretch (basic residues) spans 72-85 (SHHHRPCVPARRPR). A compositionally biased stretch (basic and acidic residues) spans 153–171 (KSYDNDDGEPHHHGGDSTH). A compositionally biased stretch (polar residues) spans 179-202 (CPTTFGSSHPSSANNHHGSSAGPQ). Zn(2+) contacts are provided by Cys387, His494, Cys496, and Cys501. The CHC2-type zinc-finger motif lies at 387–501 (CILDHQDGWG…QCHECQNEMC (115 aa)). The tract at residues 540-742 (ASNHATAGGQ…MLCYSDDMDD (203 aa)) is disordered. The span at 578–587 (YDKKDREGSH) shows a compositional bias: basic and acidic residues. Residues 614 to 626 (GELEEDEDSDDAS) are compositionally biased toward acidic residues. Residues 692-703 (QSANGNHSTTAT) are compositionally biased toward polar residues.

It belongs to the HHV-1 ICP27 protein family. In terms of assembly, self-associates and forms high-molecular-mass complexes. Interacts with host DDX39A and DDX39B; these interactions are required for UL69 function in mRNA export. Interacts with host SUPT6H, EIF4A1 and PABPC1. Phosphorylated by UL97 and host CDK1, CDK7 and CD9. Phosphorylation by CDKs impacts on UL69 nuclear localization and activity.

The protein resides in the virion tegument. It localises to the virion. It is found in the host nucleus. The protein localises to the host cytoplasm. Functionally, immediate early (EI) protein that plays many roles during productive infection including regulation of host cell cycle progression, regulation of viral gene expression or nuclear export of intronless viral RNAs. Acts as a transcriptional transactivator via interaction with the cellular transcription elongation factor SUPT6H and as a nuclear RNA export factor via interaction with UAP56, a component of the cellular mRNA export machinery. The protein is mRNA export factor ICP27 homolog of Human cytomegalovirus (strain Merlin) (HHV-5).